Consider the following 156-residue polypeptide: MSARPSLPPLPAKPAGSPRLRERPAPVGPGGEDAYSLLLRPQLGTRKVARAEEAGGEEGKREAEAWTRRAAASARRGGELRTEEPPPPAARLCCLGGGCGGGGGGGQKVSATASIPFSCKRALLTSTIPLSPPAKRRGIRTWGHPSYLTPSPTMRD.

A compositionally biased stretch (pro residues) spans 1-12; the sequence is MSARPSLPPLPA. Disordered regions lie at residues 1–89 and 129–156; these read MSAR…PPPA and PLSP…TMRD. Residues 49–67 show a composition bias toward basic and acidic residues; sequence ARAEEAGGEEGKREAEAWT.

This is an uncharacterized protein from Homo sapiens (Human).